We begin with the raw amino-acid sequence, 382 residues long: Type 2 DNA topoisomerase 6 subunit A (382 aa).

The Topo IIA-type catalytic domain maps to 14 to 155 (YDPQKVLKKL…MHITADRRGY (142 aa)). Residue tyrosine 108 is the O-(5'-phospho-DNA)-tyrosine intermediate of the active site. Mg(2+) contacts are provided by glutamate 202 and aspartate 254.

The protein belongs to the TOP6A family. Homodimer. Heterotetramer of two Top6A and two Top6B chains. Mg(2+) serves as cofactor.

The enzyme catalyses ATP-dependent breakage, passage and rejoining of double-stranded DNA.. Its function is as follows. Relaxes both positive and negative superturns and exhibits a strong decatenase activity. The polypeptide is Type 2 DNA topoisomerase 6 subunit A (Pyrococcus abyssi (strain GE5 / Orsay)).